The sequence spans 111 residues: Probable monothiol glutaredoxin 2 (111 aa).

Residues 7–109 form the Glutaredoxin domain; it reads LKFIQNAIKK…KMLKDETKLI (103 aa). Lys24 serves as a coordination point for glutathione. Residue Cys32 participates in [2Fe-2S] cluster binding. Glutathione-binding positions include Arg61, Phe73, and 86–87; that span reads CD.

It belongs to the glutaredoxin family. Monothiol subfamily.

This chain is Probable monothiol glutaredoxin 2 (grxC2), found in Rickettsia typhi (strain ATCC VR-144 / Wilmington).